The primary structure comprises 328 residues: Isopenicillin N synthase (328 aa).

Residues Arg-85, Tyr-89, Ser-181, and Tyr-187 each contribute to the isopenicillin N site. Positions 85, 89, 181, 187, 210, and 212 each coordinate N-[(5S)-5-amino-5-carboxypentanoyl]-L-cysteinyl-D-valine. The 107-residue stretch at 178-284 folds into the Fe2OG dioxygenase domain; it reads TLSSVSLIRY…RLSLPFFFHA (107 aa). Residues His-210, Asp-212, and His-266 each coordinate Fe(2+). Arg-275 is a 2-oxoglutarate binding site. Residue Ser-277 participates in isopenicillin N binding. Ser-277 is an N-[(5S)-5-amino-5-carboxypentanoyl]-L-cysteinyl-D-valine binding site.

This sequence belongs to the iron/ascorbate-dependent oxidoreductase family. Fe cation is required as a cofactor. Requires L-ascorbate as cofactor.

It catalyses the reaction N-[(5S)-5-amino-5-carboxypentanoyl]-L-cysteinyl-D-valine + O2 = isopenicillin N + 2 H2O. It functions in the pathway antibiotic biosynthesis; penicillin G biosynthesis; penicillin G from L-alpha-aminoadipate and L-cysteine and L-valine: step 2/3. In terms of biological role, removes, in the presence of oxygen, 4 hydrogen atoms from delta-L-(alpha-aminoadipyl)-L-cysteinyl-D-valine (ACV) to form the azetidinone and thiazolidine rings of isopenicillin. The sequence is that of Isopenicillin N synthase (pcbC) from Amycolatopsis lactamdurans (Nocardia lactamdurans).